A 325-amino-acid polypeptide reads, in one-letter code: Leucine carboxyl methyltransferase 1 (325 aa).

Residues Arg79, Gly104, Asp127, 174-175, and Glu200 contribute to the S-adenosyl-L-methionine site; that span reads DL.

This sequence belongs to the methyltransferase superfamily. LCMT family.

It catalyses the reaction [phosphatase 2A protein]-C-terminal L-leucine + S-adenosyl-L-methionine = [phosphatase 2A protein]-C-terminal L-leucine methyl ester + S-adenosyl-L-homocysteine. In terms of biological role, methylates the carboxyl group of the C-terminal leucine residue of protein phosphatase 2A catalytic subunits to form alpha-leucine ester residues. The polypeptide is Leucine carboxyl methyltransferase 1 (PPM1) (Eremothecium gossypii (strain ATCC 10895 / CBS 109.51 / FGSC 9923 / NRRL Y-1056) (Yeast)).